The primary structure comprises 1441 residues: Envelopment polyprotein (1441 aa).

An N-terminal signal peptide occupies residues 1–13; it reads MICILVLITVAAA. Topologically, residues 14 to 200 are lumenal; the sequence is SPVYQRCFQD…GSIANSICQN (187 aa). The N-linked (GlcNAc...) asparagine; by host glycan is linked to Asn57. The chain crosses the lipid bilayer at residues 201-221; it reads IEIIILVTLTLLIFILLSILS. Topologically, residues 222–305 are cytoplasmic; sequence KTYICYLLMP…RAARVMCKSK (84 aa). The hydrophobic stretch at 306–326 threads the membrane; it reads GPASILSIITAVLVLTFVTPI. At 327–361 the chain is on the lumenal side; the sequence is NSMVLGESKETFELEDLPDDMLEMASRINSYYLTC. The chain crosses the lipid bilayer at residues 362 to 382; sequence ILNYAVSWGLVIIGLLIGLLF. The Cytoplasmic segment spans residues 383–450; it reads KKYQHRFLNV…NCLVQYKAKW (68 aa). Over 451–471 the chain traverses the membrane; the sequence is MMNFLIIYIFLILIKDSAIVV. Over 472 to 1395 the chain is Lumenal; sequence QAAGTDFTTC…EPFKNLFGSY (924 aa). Asn490 is a glycosylation site (N-linked (GlcNAc...) asparagine; by host). Positions 1066–1087 are fusion peptide; the sequence is WGCEEFGCLAVSDGCVFGSCQD. Asn1177 carries an N-linked (GlcNAc...) asparagine; by host glycan. Over 1396 to 1416 the chain traverses the membrane; that stretch reads IGIFYTFIISIVVLLVIIYVL. Residues 1417–1433 are Cytoplasmic-facing; it reads LPICFKLRDTLRKHEDA.

It belongs to the orthobunyaviruses M polyprotein family. In terms of assembly, glycoprotein C and Glycoprotein N interact with each other.

It localises to the virion membrane. Its subcellular location is the host Golgi apparatus membrane. The protein resides in the host endoplasmic reticulum membrane. In terms of biological role, glycoprotein C and glycoprotein N interact with each other and are present at the surface of the virion. They are able to attach the virion to a cell receptor and to promote fusion of membranes after endocytosis of the virion. The sequence is that of Envelopment polyprotein (GP) from Bunyavirus La Crosse (isolate Human/United States/L78/1978).